The primary structure comprises 400 residues: Tryptophan synthase beta chain (400 aa).

The residue at position 90 (K90) is an N6-(pyridoxal phosphate)lysine.

The protein belongs to the TrpB family. In terms of assembly, tetramer of two alpha and two beta chains. It depends on pyridoxal 5'-phosphate as a cofactor.

The catalysed reaction is (1S,2R)-1-C-(indol-3-yl)glycerol 3-phosphate + L-serine = D-glyceraldehyde 3-phosphate + L-tryptophan + H2O. Its pathway is amino-acid biosynthesis; L-tryptophan biosynthesis; L-tryptophan from chorismate: step 5/5. Its function is as follows. The beta subunit is responsible for the synthesis of L-tryptophan from indole and L-serine. The protein is Tryptophan synthase beta chain of Bacillus velezensis (strain DSM 23117 / BGSC 10A6 / LMG 26770 / FZB42) (Bacillus amyloliquefaciens subsp. plantarum).